A 340-amino-acid chain; its full sequence is Phosphoribosylformylglycinamidine cyclo-ligase (340 aa).

This sequence belongs to the AIR synthase family.

It is found in the cytoplasm. It carries out the reaction 2-formamido-N(1)-(5-O-phospho-beta-D-ribosyl)acetamidine + ATP = 5-amino-1-(5-phospho-beta-D-ribosyl)imidazole + ADP + phosphate + H(+). It participates in purine metabolism; IMP biosynthesis via de novo pathway; 5-amino-1-(5-phospho-D-ribosyl)imidazole from N(2)-formyl-N(1)-(5-phospho-D-ribosyl)glycinamide: step 2/2. In Acetivibrio thermocellus (strain ATCC 27405 / DSM 1237 / JCM 9322 / NBRC 103400 / NCIMB 10682 / NRRL B-4536 / VPI 7372) (Clostridium thermocellum), this protein is Phosphoribosylformylglycinamidine cyclo-ligase.